The sequence spans 1040 residues: Multidrug resistance protein MdtB (1040 aa).

A run of 12 helical transmembrane segments spans residues 16-36, 347-367, 369-389, 396-416, 440-460, 472-492, 537-557, 863-883, 888-908, 911-931, 968-988, and 998-1018; these read FIMR…AGII, LMMA…NIPA, IIPG…MVFL, LTLM…IVVI, IGFT…PLLF, FAIT…TLTP, WLTL…WVFI, LGST…VLGI, FIHP…ALLA, IAGS…IGIV, ILMT…STGV, and IGMV…TPVI.

This sequence belongs to the resistance-nodulation-cell division (RND) (TC 2.A.6) family. MdtB subfamily. Part of a tripartite efflux system composed of MdtA, MdtB and MdtC. MdtB forms a heteromultimer with MdtC.

The protein resides in the cell inner membrane. Its function is as follows. The MdtABC tripartite complex confers resistance against novobiocin and deoxycholate. The polypeptide is Multidrug resistance protein MdtB (Escherichia coli O45:K1 (strain S88 / ExPEC)).